The chain runs to 129 residues: Small ribosomal subunit protein uS11 (129 aa).

This sequence belongs to the universal ribosomal protein uS11 family. Part of the 30S ribosomal subunit. Interacts with proteins S7 and S18. Binds to IF-3.

Functionally, located on the platform of the 30S subunit, it bridges several disparate RNA helices of the 16S rRNA. Forms part of the Shine-Dalgarno cleft in the 70S ribosome. This is Small ribosomal subunit protein uS11 from Enterobacter sp. (strain 638).